A 486-amino-acid chain; its full sequence is Maintenance of mitochondrial morphology protein 1 (486 aa).

At 1 to 20 (MNFQQSAIPPFSFLLSFTQG) the chain is on the lumenal side. A helical transmembrane segment spans residues 21–41 (FLLGQLSVVLLIGAFIKFFIF). Topologically, residues 42-486 (GEAPPPPSRG…GSLPDGAVGN (445 aa)) are cytoplasmic. 3 disordered regions span residues 70–96 (TNEAGSRSLREKPSTSNVLRPVPSSST), 271–320 (TPPL…SPKS), and 387–486 (RTGV…AVGN). Residues 83–96 (STSNVLRPVPSSST) are compositionally biased toward polar residues. The SMP-LTD domain occupies 128-379 (QPESLDWFNV…EPRVQVVGLP (252 aa)). Residues 271-282 (TPPLHTPSPSPA) are compositionally biased toward pro residues. Residues 292-306 (QSQPENNSSNPNQQS) are compositionally biased toward low complexity. Composition is skewed to polar residues over residues 398-407 (TGSNAASRSA) and 440-450 (DSVSRSSSFNV). The segment covering 460-474 (MTREDSRGAISDDFH) has biased composition (basic and acidic residues).

This sequence belongs to the MMM1 family. In terms of assembly, homodimer. Component of the ER-mitochondria encounter structure (ERMES) or MDM complex, composed of mmm1, mdm10, mdm12 and mdm34. A mmm1 homodimer associates with one molecule of mdm12 on each side in a pairwise head-to-tail manner, and the SMP-LTD domains of mmm1 and mdm12 generate a continuous hydrophobic tunnel for phospholipid trafficking.

The protein localises to the endoplasmic reticulum membrane. Functionally, component of the ERMES/MDM complex, which serves as a molecular tether to connect the endoplasmic reticulum (ER) and mitochondria. Components of this complex are involved in the control of mitochondrial shape and protein biogenesis, and function in nonvesicular lipid trafficking between the ER and mitochondria. The mdm12-mmm1 subcomplex functions in the major beta-barrel assembly pathway that is responsible for biogenesis of all outer membrane beta-barrel proteins, and acts in a late step after the SAM complex. The mdm10-mdm12-mmm1 subcomplex further acts in the TOM40-specific pathway after the action of the mdm12-mmm1 complex. Essential for establishing and maintaining the structure of mitochondria and maintenance of mtDNA nucleoids. This is Maintenance of mitochondrial morphology protein 1 from Aspergillus terreus (strain NIH 2624 / FGSC A1156).